We begin with the raw amino-acid sequence, 484 residues long: Sushi domain-containing protein 4 (484 aa).

The N-terminal stretch at 1-35 is a signal peptide; the sequence is MFHHADKGGKKSAFGHPVCGQIILSIILLRPPLLV. 4 consecutive Sushi domains span residues 46-110, 111-168, 169-230, and 232-295; these read QICK…VCLS, EDCL…QPTC, QGCL…RCLD, and EACS…YCVK. 8 disulfide bridges follow: C48-C90, C76-C108, C113-C156, C138-C168, C171-C215, C201-C228, C234-C280, and C265-C293. Residues N95 and N125 are each glycosylated (N-linked (GlcNAc...) asparagine). A glycan (N-linked (GlcNAc...) asparagine) is linked at N183. A helical membrane pass occupies residues 311 to 331; sequence WKVVACTATSVLLALLLVITA. A disordered region spans residues 374–484; it reads SGNYCQPPND…PLVEDGEEDC (111 aa). Composition is skewed to polar residues over residues 424-442 and 449-467; these read DSLSDTSECLQGLQPSSSH and SEKTNAITSMEETASTSPS. The segment covering 470–484 has biased composition (acidic residues); that stretch reads IADEIPLVEDGEEDC.

It localises to the membrane. The polypeptide is Sushi domain-containing protein 4 (susd4) (Danio rerio (Zebrafish)).